The sequence spans 347 residues: UDP-N-acetylenolpyruvoylglucosamine reductase (347 aa).

Residues 24 to 195 (FDARARVAAR…VAVTFRLPKA (172 aa)) form the FAD-binding PCMH-type domain. Arg-171 is a catalytic residue. Ser-247 serves as the catalytic Proton donor. Residue Glu-343 is part of the active site.

The protein belongs to the MurB family. It depends on FAD as a cofactor.

Its subcellular location is the cytoplasm. It catalyses the reaction UDP-N-acetyl-alpha-D-muramate + NADP(+) = UDP-N-acetyl-3-O-(1-carboxyvinyl)-alpha-D-glucosamine + NADPH + H(+). It participates in cell wall biogenesis; peptidoglycan biosynthesis. In terms of biological role, cell wall formation. The protein is UDP-N-acetylenolpyruvoylglucosamine reductase of Burkholderia pseudomallei (strain 668).